Here is a 408-residue protein sequence, read N- to C-terminus: Prenyltransferase criF (408 aa).

Residues arginine 94, lysine 181, tyrosine 183, arginine 248, lysine 250, tyrosine 252, glutamine 334, tyrosine 336, tyrosine 400, and tyrosine 404 each contribute to the dimethylallyl diphosphate site.

It belongs to the tryptophan dimethylallyltransferase family. In terms of assembly, homodimer.

The enzyme catalyses preechinulin + dimethylallyl diphosphate = tardioxopiperazine B + diphosphate. The catalysed reaction is preechinulin + dimethylallyl diphosphate = tardioxopiperazine A + diphosphate. It catalyses the reaction tardioxopiperazine A + dimethylallyl diphosphate = echinulin + diphosphate. It carries out the reaction tardioxopiperazine A + dimethylallyl diphosphate = variecolorin L + diphosphate. The enzyme catalyses neoechinulin A + dimethylallyl diphosphate = variecolorin G + diphosphate. The catalysed reaction is neoechinulin A + dimethylallyl diphosphate = isoechinulin A + diphosphate. It catalyses the reaction isoechinulin A + dimethylallyl diphosphate = dehydroechinulin + diphosphate. It carries out the reaction neoechinulin B + dimethylallyl diphosphate = isoechinulin B + diphosphate. The protein operates within secondary metabolite biosynthesis. Its pathway is alkaloid biosynthesis. Prenyltransferase; part of the gene cluster that mediates the biosynthesis of echinulin family alkaloid. The pathway begins with the biosynthesis of the cyclic dipeptide cyclo-L-Trp-L-Ala (cyclo-TA) by the NRPS criC via condensation of L-alanine and L-tryptophan. The prenyltransferase criA then catalyzes the first prenylation step, a reverse prenylation reaction at C2, to yield preechinulin. Preechinulin is the substrate of the cytochrome P450 monooxygenase criE that catalyzes the formation of the double bond between C10 and C11 to produce neoechulin A. The unique prenyltransferase criF functions as a competitive enzyme with criE for preechinulin metabolization and uses preechinulin for effective regiospecific prenylations. Preechinulin is prenylated by criF at C5 or C7. C7-prenylation leads to accumulation of tardioxopiperazine B without further modification by criF. In contrast, the C5-prenylated tardioxopiperazine A can be prenylated again by criF, predominantly at C7 to form echinulin or less frequently at C4 to give variecolorin L. CriF also accepts neoechilunin A to produce varlecolorin G (prenylation at C5) or isoechinulin A (prenylation at C7). CriF further converts isoechinulin A into dehydroechinulin. Moreover, a yet unidentified enzyme can also convert neoechilunin A into neoechilunin B by introducing a double bond between positions C14 and C17 and thus provides a further substrate to criF for C5 and C7 prenylation. This chain is Prenyltransferase criF, found in Aspergillus cristatus (Chinese Fuzhuan brick tea-fermentation fungus).